Consider the following 430-residue polypeptide: Glutamate-1-semialdehyde 2,1-aminomutase (430 aa).

An N6-(pyridoxal phosphate)lysine modification is found at lysine 265.

This sequence belongs to the class-III pyridoxal-phosphate-dependent aminotransferase family. HemL subfamily. As to quaternary structure, homodimer. Requires pyridoxal 5'-phosphate as cofactor.

Its subcellular location is the cytoplasm. The enzyme catalyses (S)-4-amino-5-oxopentanoate = 5-aminolevulinate. It participates in porphyrin-containing compound metabolism; protoporphyrin-IX biosynthesis; 5-aminolevulinate from L-glutamyl-tRNA(Glu): step 2/2. This Shewanella baltica (strain OS155 / ATCC BAA-1091) protein is Glutamate-1-semialdehyde 2,1-aminomutase.